The primary structure comprises 440 residues: Thymidine phosphorylase (440 aa).

It belongs to the thymidine/pyrimidine-nucleoside phosphorylase family. In terms of assembly, homodimer.

The catalysed reaction is thymidine + phosphate = 2-deoxy-alpha-D-ribose 1-phosphate + thymine. It functions in the pathway pyrimidine metabolism; dTMP biosynthesis via salvage pathway; dTMP from thymine: step 1/2. In terms of biological role, the enzymes which catalyze the reversible phosphorolysis of pyrimidine nucleosides are involved in the degradation of these compounds and in their utilization as carbon and energy sources, or in the rescue of pyrimidine bases for nucleotide synthesis. This Escherichia coli O139:H28 (strain E24377A / ETEC) protein is Thymidine phosphorylase.